Consider the following 388-residue polypeptide: tRNA-specific adenosine deaminase 1 (388 aa).

Residues 63–388 enclose the A to I editase domain; it reads CLATGVKCTP…PNGGNEFQWI (326 aa). Histidine 89 is a binding site for Zn(2+). Catalysis depends on glutamate 91, which acts as the Proton donor. Arginine 96 serves as a coordination point for 1D-myo-inositol hexakisphosphate. Residues cysteine 144 and cysteine 201 each coordinate Zn(2+). Residues lysine 204, lysine 357, and arginine 363 each coordinate 1D-myo-inositol hexakisphosphate.

The protein belongs to the ADAT1 family. 1D-myo-inositol hexakisphosphate is required as a cofactor. Requires Zn(2+) as cofactor.

It localises to the cytoplasm. Its subcellular location is the nucleus. The enzyme catalyses adenosine(37) in tRNA(Ala) + H2O + H(+) = inosine(37) in tRNA(Ala) + NH4(+). Functionally, deaminates adenosine-37 to inosine in tRNA-Ala. This chain is tRNA-specific adenosine deaminase 1, found in Schizosaccharomyces pombe (strain 972 / ATCC 24843) (Fission yeast).